Reading from the N-terminus, the 550-residue chain is Hydroxylamine reductase (550 aa).

[2Fe-2S] cluster contacts are provided by Cys-3, Cys-6, Cys-18, and Cys-25. Residues His-249, Glu-273, Cys-317, Cys-405, Cys-433, Cys-458, Glu-492, and Lys-494 each contribute to the hybrid [4Fe-2O-2S] cluster site. Cys-405 is modified (cysteine persulfide).

Belongs to the HCP family. [2Fe-2S] cluster is required as a cofactor. Requires hybrid [4Fe-2O-2S] cluster as cofactor.

Its subcellular location is the cytoplasm. It carries out the reaction A + NH4(+) + H2O = hydroxylamine + AH2 + H(+). Its function is as follows. Catalyzes the reduction of hydroxylamine to form NH(3) and H(2)O. The sequence is that of Hydroxylamine reductase from Escherichia coli O6:K15:H31 (strain 536 / UPEC).